The following is a 251-amino-acid chain: tRNA-uridine aminocarboxypropyltransferase 2 (251 aa).

The Zn(2+) site is built by cysteine 23, cysteine 26, cysteine 33, and cysteine 35. The short motif at aspartate 131–tryptophan 134 is the DXTW element.

This sequence belongs to the TDD superfamily. DTWD2 family.

It catalyses the reaction a uridine in tRNA + S-adenosyl-L-methionine = a 3-[(3S)-3-amino-3-carboxypropyl]uridine in tRNA + S-methyl-5'-thioadenosine + H(+). In terms of biological role, catalyzes the formation of 3-(3-amino-3-carboxypropyl)uridine (acp3U) at position 20a in the D-loop of several cytoplasmic tRNAs (acp3U(20a)). In Drosophila melanogaster (Fruit fly), this protein is tRNA-uridine aminocarboxypropyltransferase 2.